A 209-amino-acid polypeptide reads, in one-letter code: Uracil phosphoribosyltransferase (209 aa).

5-phospho-alpha-D-ribose 1-diphosphate-binding positions include R79, R104, and 131-139 (DPMLATGGS). Uracil is bound by residues I194 and 199-201 (GDA). D200 is a 5-phospho-alpha-D-ribose 1-diphosphate binding site.

The protein belongs to the UPRTase family. The cofactor is Mg(2+).

It carries out the reaction UMP + diphosphate = 5-phospho-alpha-D-ribose 1-diphosphate + uracil. Its pathway is pyrimidine metabolism; UMP biosynthesis via salvage pathway; UMP from uracil: step 1/1. Allosterically activated by GTP. In terms of biological role, catalyzes the conversion of uracil and 5-phospho-alpha-D-ribose 1-diphosphate (PRPP) to UMP and diphosphate. This Streptococcus agalactiae serotype III (strain NEM316) protein is Uracil phosphoribosyltransferase.